The following is a 241-amino-acid chain: Peroxisomal membrane protein 11C (241 aa).

The Cytoplasmic segment spans residues 1-122 (MALLNRLASA…ADAKVLRVDS (122 aa)). The helical transmembrane segment at 123 to 149 (AWWWTLNTALWTLSLLLGAVKALWTML) threads the bilayer. The Lumenal segment spans residues 150-211 (KLRQKLRSPT…GVLWAGRFPP (62 aa)). The chain crosses the membrane as a helical span at residues 212–227 (WLVGLMGTISSILSTC). Residues 228 to 241 (QAVRAGRQAEADSP) lie on the Cytoplasmic side of the membrane.

It belongs to the peroxin-11 family. As to quaternary structure, homodimer. Heterodimer with either PEX11A or PEX11B. Interacts with FIS1. Expressed in liver and at much lower levels in heart, kidney and testis.

The protein localises to the peroxisome membrane. In terms of biological role, promotes membrane protrusion and elongation on the peroxisomal surface. The sequence is that of Peroxisomal membrane protein 11C (Pex11g) from Mus musculus (Mouse).